Here is a 305-residue protein sequence, read N- to C-terminus: P2Y purinoceptor 14 (305 aa).

Over 1–29 the chain is Extracellular; sequence MDNTTTTEPPKQPCTRNTLITQQIIPMLY. A glycan (N-linked (GlcNAc...) asparagine) is linked at Asn-3. Residues 30–50 form a helical membrane-spanning segment; that stretch reads CVVFITGVLLNGISGWIFFYV. Residues 51–55 are Cytoplasmic-facing; the sequence is PSSKS. The chain crosses the membrane as a helical span at residues 56-76; it reads FIIYLKNIVVADFLMGLTFPF. Residues 77–96 are Extracellular-facing; that stretch reads KVLSDSGLGPWQLNVFVFRV. A helical membrane pass occupies residues 97–117; sequence SAVIFYVNMYVSIAFFGLISF. The Cytoplasmic segment spans residues 118 to 139; it reads DRYYKIVKPLLVSIVQSVNYSK. A helical membrane pass occupies residues 140–160; that stretch reads VLSVLVWVLMLLLAVPNIILT. Residue Asn-161 is glycosylated (N-linked (GlcNAc...) asparagine). Residues 161-188 are Extracellular-facing; that stretch reads NQSVKDVTNIQCMELKNELGRKWHKASN. Residues 189 to 209 form a helical membrane-spanning segment; the sequence is YVFVSIFWIVFLLLTVFYMAI. The Cytoplasmic portion of the chain corresponds to 210–234; the sequence is TRKIFKSHLKSRKNSISVKRKSSRN. The chain crosses the membrane as a helical span at residues 235–255; it reads IFSIVLAFVACFAPYHVARIP. Over 256 to 278 the chain is Extracellular; it reads YTKSQTEGHYSCQAKETLLYTKE. The chain crosses the membrane as a helical span at residues 279–299; sequence FTLLLSAANVCLDPISISSYA. Over 300–305 the chain is Cytoplasmic; it reads SRLEKS.

The protein belongs to the G-protein coupled receptor 1 family.

It localises to the cell membrane. Receptor for UDP-glucose coupled to G-proteins. This is P2Y purinoceptor 14 (P2ry14) from Rattus norvegicus (Rat).